Reading from the N-terminus, the 251-residue chain is V-set and transmembrane domain-containing protein 2B (251 aa).

The first 25 residues, 1–25, serve as a signal peptide directing secretion; it reads MEKQGLFSALCYLMLNTPLLFSVNA. In terms of domain architecture, Ig-like V-type spans 26 to 142; it reads TFTEVPKDVT…DETQEHKAQA (117 aa). Topologically, residues 26 to 226 are extracellular; that stretch reads TFTEVPKDVT…RQQHGSGTGP (201 aa). The cysteines at positions 46 and 125 are disulfide-linked. The segment at 157–213 is disordered; that stretch reads AAEAVSHIQSSGPRRNNPSSRATPEPGNKRAVPPAENLAPSLSTAASSSASPAPGKA. Composition is skewed to low complexity over residues 166-177 and 195-213; these read SSGPRRNNPSSR and APSLSTAASSSASPAPGKA. Residues 227 to 247 form a helical membrane-spanning segment; the sequence is IFANDPALYMFLLIFHQLVYL. The Cytoplasmic portion of the chain corresponds to 248–251; that stretch reads LLNH.

The protein resides in the membrane. This Xenopus tropicalis (Western clawed frog) protein is V-set and transmembrane domain-containing protein 2B (vstm2b).